A 276-amino-acid polypeptide reads, in one-letter code: Homeobox-leucine zipper protein HOX11 (276 aa).

The tract at residues 1–92 (MVDGHLEAST…DDGGSARKKL (92 aa)) is disordered. A compositionally biased stretch (polar residues) spans 39 to 48 (LSSSPNNSAG). Gly residues predominate over residues 58-73 (HGLGGNDAAPGGGGGD). The homeobox DNA-binding region spans 87–146 (SARKKLRLSKEQSAFLEESFKEHSTLNPKQKLALAKQLNLRPRQVEVWFQNRRARTKLKQ). The tract at residues 145–189 (KQTEVDCEYLKRCCETLTEENRRLQKELAELRALKTVHPFYMHLP) is leucine-zipper. The tract at residues 214 to 244 (AATSSTAAPPAAPSSGGIAATSSSSAAAAAA) is disordered.

This sequence belongs to the HD-ZIP homeobox family. Class II subfamily. In terms of tissue distribution, expressed in stems, leaf sheaths and blades and panicles.

It localises to the nucleus. In terms of biological role, probable transcription factor. The protein is Homeobox-leucine zipper protein HOX11 (HOX11) of Oryza sativa subsp. indica (Rice).